A 117-amino-acid polypeptide reads, in one-letter code: Large ribosomal subunit protein bL19 (117 aa).

This sequence belongs to the bacterial ribosomal protein bL19 family.

Its function is as follows. This protein is located at the 30S-50S ribosomal subunit interface and may play a role in the structure and function of the aminoacyl-tRNA binding site. In Vibrio vulnificus (strain CMCP6), this protein is Large ribosomal subunit protein bL19.